We begin with the raw amino-acid sequence, 392 residues long: 1-deoxy-D-xylulose 5-phosphate reductoisomerase (392 aa).

5 residues coordinate NADPH: T10, G11, S12, I13, and N124. 1-deoxy-D-xylulose 5-phosphate is bound at residue K125. Residue E126 coordinates NADPH. D150 is a binding site for Mn(2+). Residues S151, E152, S180, and H203 each coordinate 1-deoxy-D-xylulose 5-phosphate. Position 152 (E152) interacts with Mn(2+). Residue G209 coordinates NADPH. 1-deoxy-D-xylulose 5-phosphate is bound by residues S216, N221, K222, and E225. Residue E225 participates in Mn(2+) binding.

The protein belongs to the DXR family. Requires Mg(2+) as cofactor. Mn(2+) is required as a cofactor.

It catalyses the reaction 2-C-methyl-D-erythritol 4-phosphate + NADP(+) = 1-deoxy-D-xylulose 5-phosphate + NADPH + H(+). It participates in isoprenoid biosynthesis; isopentenyl diphosphate biosynthesis via DXP pathway; isopentenyl diphosphate from 1-deoxy-D-xylulose 5-phosphate: step 1/6. In terms of biological role, catalyzes the NADPH-dependent rearrangement and reduction of 1-deoxy-D-xylulose-5-phosphate (DXP) to 2-C-methyl-D-erythritol 4-phosphate (MEP). The polypeptide is 1-deoxy-D-xylulose 5-phosphate reductoisomerase (Saccharophagus degradans (strain 2-40 / ATCC 43961 / DSM 17024)).